A 341-amino-acid chain; its full sequence is GTP 3',8-cyclase (341 aa).

One can recognise a Radical SAM core domain in the interval 11–231 (KRERPLRDLR…DLINQHMPTE (221 aa)). Arg20 is a GTP binding site. [4Fe-4S] cluster is bound by residues Cys27 and Cys31. Tyr33 lines the S-adenosyl-L-methionine pocket. Cys34 is a binding site for [4Fe-4S] cluster. Residue Arg75 participates in GTP binding. Gly79 serves as a coordination point for S-adenosyl-L-methionine. Thr106 contributes to the GTP binding site. Ser130 serves as a coordination point for S-adenosyl-L-methionine. Lys167 is a GTP binding site. Met201 contributes to the S-adenosyl-L-methionine binding site. [4Fe-4S] cluster is bound by residues Cys265 and Cys268. Residue 270 to 272 (RAR) coordinates GTP. A [4Fe-4S] cluster-binding site is contributed by Cys282.

Belongs to the radical SAM superfamily. MoaA family. Monomer and homodimer. The cofactor is [4Fe-4S] cluster.

The catalysed reaction is GTP + AH2 + S-adenosyl-L-methionine = (8S)-3',8-cyclo-7,8-dihydroguanosine 5'-triphosphate + 5'-deoxyadenosine + L-methionine + A + H(+). It functions in the pathway cofactor biosynthesis; molybdopterin biosynthesis. Its function is as follows. Catalyzes the cyclization of GTP to (8S)-3',8-cyclo-7,8-dihydroguanosine 5'-triphosphate. This Bacillus velezensis (strain DSM 23117 / BGSC 10A6 / LMG 26770 / FZB42) (Bacillus amyloliquefaciens subsp. plantarum) protein is GTP 3',8-cyclase.